Here is a 458-residue protein sequence, read N- to C-terminus: NADH-quinone oxidoreductase subunit N (458 aa).

The next 14 helical transmembrane spans lie at 4 to 24, 30 to 50, 62 to 82, 94 to 114, 118 to 138, 153 to 173, 194 to 214, 235 to 255, 261 to 281, 290 to 310, 318 to 338, 361 to 381, 397 to 417, and 438 to 458; these read LLPE…AVII, IISN…FKYS, GINI…SMII, LKFE…VAIS, FLLL…LAGF, FILG…IYGF, LGLI…LSSV, FTAA…KLII, INYN…AFGA, LMAY…LLHN, LLYI…LIML, IAAI…LTGF, FILA…YLKV, and LLLI…IISF.

The protein belongs to the complex I subunit 2 family. NDH-1 is composed of 14 different subunits. Subunits NuoA, H, J, K, L, M, N constitute the membrane sector of the complex.

Its subcellular location is the cell inner membrane. The catalysed reaction is a quinone + NADH + 5 H(+)(in) = a quinol + NAD(+) + 4 H(+)(out). Its function is as follows. NDH-1 shuttles electrons from NADH, via FMN and iron-sulfur (Fe-S) centers, to quinones in the respiratory chain. The immediate electron acceptor for the enzyme in this species is believed to be ubiquinone. Couples the redox reaction to proton translocation (for every two electrons transferred, four hydrogen ions are translocated across the cytoplasmic membrane), and thus conserves the redox energy in a proton gradient. The protein is NADH-quinone oxidoreductase subunit N of Rickettsia felis (strain ATCC VR-1525 / URRWXCal2) (Rickettsia azadi).